The following is a 1184-amino-acid chain: DNA-directed RNA polymerase subunit beta' (1184 aa).

Positions 60, 62, 75, and 78 each coordinate Zn(2+). 3 residues coordinate Mg(2+): D449, D451, and D453. 4 residues coordinate Zn(2+): C794, C867, C874, and C877. Positions 1165-1184 (NDQQERQDKEKEETEVKASN) are disordered.

This sequence belongs to the RNA polymerase beta' chain family. In terms of assembly, the RNAP catalytic core consists of 2 alpha, 1 beta, 1 beta' and 1 omega subunit. When a sigma factor is associated with the core the holoenzyme is formed, which can initiate transcription. Mg(2+) serves as cofactor. The cofactor is Zn(2+).

The catalysed reaction is RNA(n) + a ribonucleoside 5'-triphosphate = RNA(n+1) + diphosphate. Its function is as follows. DNA-dependent RNA polymerase catalyzes the transcription of DNA into RNA using the four ribonucleoside triphosphates as substrates. The protein is DNA-directed RNA polymerase subunit beta' of Thermoanaerobacter pseudethanolicus (strain ATCC 33223 / 39E) (Clostridium thermohydrosulfuricum).